Reading from the N-terminus, the 467-residue chain is Ribulose bisphosphate carboxylase large chain (467 aa).

The substrate site is built by Xaa106 and Thr156. The active-site Proton acceptor is Lys158. Lys160 contributes to the substrate binding site. Mg(2+)-binding residues include Lys184, Asp186, and Glu187. An N6-carboxylysine modification is found at Lys184. The active-site Proton acceptor is the His276. Arg277, His309, and Ser361 together coordinate substrate.

It belongs to the RuBisCO large chain family. Type I subfamily. As to quaternary structure, heterohexadecamer of 8 large chains and 8 small chains. Mg(2+) serves as cofactor.

Its subcellular location is the plastid. The protein localises to the chloroplast. The enzyme catalyses 2 (2R)-3-phosphoglycerate + 2 H(+) = D-ribulose 1,5-bisphosphate + CO2 + H2O. It carries out the reaction D-ribulose 1,5-bisphosphate + O2 = 2-phosphoglycolate + (2R)-3-phosphoglycerate + 2 H(+). In terms of biological role, ruBisCO catalyzes two reactions: the carboxylation of D-ribulose 1,5-bisphosphate, the primary event in carbon dioxide fixation, as well as the oxidative fragmentation of the pentose substrate in the photorespiration process. Both reactions occur simultaneously and in competition at the same active site. The chain is Ribulose bisphosphate carboxylase large chain (rbcL) from Chondrus crispus (Carrageen Irish moss).